A 133-amino-acid chain; its full sequence is Probable mitochondrial pyruvate carrier 2 (133 aa).

A run of 3 helical transmembrane segments spans residues 39-55, 73-91, and 99-116; these read VTNL…IVPI, ASSL…TLIS, and MLAA…YNIY.

Belongs to the mitochondrial pyruvate carrier (MPC) (TC 2.A.105) family.

It localises to the mitochondrion inner membrane. Its function is as follows. May mediate the uptake of pyruvate into mitochondria. This is Probable mitochondrial pyruvate carrier 2 from Dictyostelium discoideum (Social amoeba).